The sequence spans 213 residues: Pyridoxine/pyridoxamine 5'-phosphate oxidase (213 aa).

Substrate-binding positions include 10-13 and Lys68; that span reads REEY. FMN is bound by residues 63–68, 78–79, Lys85, and Gln107; these read RMLLLK and FT. Substrate contacts are provided by Tyr125, Arg129, and Ser133. Residues 142-143 and Trp186 each bind FMN; that span reads QS. 192-194 contributes to the substrate binding site; it reads RLH. An FMN-binding site is contributed by Arg196.

The protein belongs to the pyridoxamine 5'-phosphate oxidase family. Homodimer. FMN serves as cofactor.

It catalyses the reaction pyridoxamine 5'-phosphate + O2 + H2O = pyridoxal 5'-phosphate + H2O2 + NH4(+). The catalysed reaction is pyridoxine 5'-phosphate + O2 = pyridoxal 5'-phosphate + H2O2. It participates in cofactor metabolism; pyridoxal 5'-phosphate salvage; pyridoxal 5'-phosphate from pyridoxamine 5'-phosphate: step 1/1. The protein operates within cofactor metabolism; pyridoxal 5'-phosphate salvage; pyridoxal 5'-phosphate from pyridoxine 5'-phosphate: step 1/1. Its function is as follows. Catalyzes the oxidation of either pyridoxine 5'-phosphate (PNP) or pyridoxamine 5'-phosphate (PMP) into pyridoxal 5'-phosphate (PLP). This chain is Pyridoxine/pyridoxamine 5'-phosphate oxidase, found in Nocardioides sp. (strain ATCC BAA-499 / JS614).